Reading from the N-terminus, the 88-residue chain is Antitoxin HipB (88 aa).

Positions 17 to 71 (MKLVRQQNGWTQSELAKKIGIKQATISNFENNPDNTTLTTFFKILQSLELSMTLC) constitute an HTH cro/C1-type domain. A DNA-binding region (H-T-H motif) is located at residues 21 to 47 (RQQNGWTQSELAKKIGIKQATISNFEN).

Homodimer. Binds operator DNA sites in the absence of HipA, inducing a 70 degree bend in consecutive operators and deforming DNA between the operators so that HipB dimers bind on opposite faces of the DNA. Forms a HipA(2)HipB(2) heterotetramer which can interact with a single operator site on DNA, inducing a 70 degree bend. When 2 operators are present each HipB dimer contacts 1 HipA molecule, which are brought together by the DNA bend and dimerize, blocking the HipA active site and inactivating its toxic activity. HipA-HipB-induced bending also distorts the -35 and -10 boxes of the promoter and probably prevents sigma-factor binding, and additionally bound HipB and HipA block RNA polymerase access to the -35 box, thus repressing the operon. This complex also blocks the toxic activity of HipA. Mutations present in allele hipA7 (G22S and D291A) decrease the affinity of HipA for HipB. In terms of processing, degraded by Lon protease in vivo; half-life is 17 minutes in wild-type cells and over 200 minutes in a lon deletion strain. In vitro degradation by Lon is Mg(2+)-ATP-dependent.

Its activity is regulated as follows. Degraded by Lon protease; degradation is inhibited in a HipA-HipB complex and when bound to the operator consensus sequence dsDNA. Its function is as follows. Antitoxin component of a type II toxin-antitoxin (TA) system. Neutralizes the toxic effect of cognate toxin HipA. Also neutralizes the toxic effect of non-cognate toxin YjjJ. Binds to operator sites with the consensus sequence 5-'TATCCN(8)GGATA-3' to repress the hipBA operon promoter; binding of HipB(2) to DNA induces a 70 degree bend. This forces HipA dimerization, which blocks HipA's active site and thus its toxic action. May play a role in biofilm formation. The protein is Antitoxin HipB (hipB) of Escherichia coli (strain K12).